The chain runs to 215 residues: tRNA (guanine-N(7)-)-methyltransferase (215 aa).

S-adenosyl-L-methionine is bound by residues glutamate 44, glutamate 69, aspartate 96, and aspartate 118. Residue aspartate 118 is part of the active site. Substrate contacts are provided by residues lysine 122, aspartate 154, and 192 to 195; that span reads TEYE.

Belongs to the class I-like SAM-binding methyltransferase superfamily. TrmB family.

It catalyses the reaction guanosine(46) in tRNA + S-adenosyl-L-methionine = N(7)-methylguanosine(46) in tRNA + S-adenosyl-L-homocysteine. It participates in tRNA modification; N(7)-methylguanine-tRNA biosynthesis. Catalyzes the formation of N(7)-methylguanine at position 46 (m7G46) in tRNA. This chain is tRNA (guanine-N(7)-)-methyltransferase, found in Levilactobacillus brevis (strain ATCC 367 / BCRC 12310 / CIP 105137 / JCM 1170 / LMG 11437 / NCIMB 947 / NCTC 947) (Lactobacillus brevis).